Here is an 830-residue protein sequence, read N- to C-terminus: Lon protease (830 aa).

The tract at residues 1-28 is disordered; that stretch reads MTFDTNDDSIAKNSLAPYNQETEQQQEE. In terms of domain architecture, Lon N-terminal spans 50 to 245; the sequence is IPILPLRDVV…LVITHLTHEA (196 aa). 397–404 contributes to the ATP binding site; the sequence is GPPGVGKT. The Lon proteolytic domain occupies 633–814; the sequence is TLPPGVALGL…DEVLPLAFSE (182 aa). Active-site residues include Ser-720 and Lys-763.

This sequence belongs to the peptidase S16 family. As to quaternary structure, homohexamer. Organized in a ring with a central cavity.

It is found in the cytoplasm. It carries out the reaction Hydrolysis of proteins in presence of ATP.. Functionally, ATP-dependent serine protease that mediates the selective degradation of mutant and abnormal proteins as well as certain short-lived regulatory proteins. Required for cellular homeostasis and for survival from DNA damage and developmental changes induced by stress. Degrades polypeptides processively to yield small peptide fragments that are 5 to 10 amino acids long. Binds to DNA in a double-stranded, site-specific manner. In Lawsonia intracellularis (strain PHE/MN1-00), this protein is Lon protease.